A 63-amino-acid chain; its full sequence is Large ribosomal subunit protein bL28 (63 aa).

It belongs to the bacterial ribosomal protein bL28 family.

In Clostridium beijerinckii (strain ATCC 51743 / NCIMB 8052) (Clostridium acetobutylicum), this protein is Large ribosomal subunit protein bL28.